The following is a 233-amino-acid chain: N-(5'-phosphoribosyl)anthranilate isomerase (233 aa).

Belongs to the TrpF family.

It catalyses the reaction N-(5-phospho-beta-D-ribosyl)anthranilate = 1-(2-carboxyphenylamino)-1-deoxy-D-ribulose 5-phosphate. It functions in the pathway amino-acid biosynthesis; L-tryptophan biosynthesis; L-tryptophan from chorismate: step 3/5. The protein is N-(5'-phosphoribosyl)anthranilate isomerase of Ralstonia pickettii (strain 12J).